Consider the following 275-residue polypeptide: D-apionate oxidoisomerase (275 aa).

Residues 11–13 (GKM), Glu-32, and Asp-68 contribute to the NAD(+) site. 2 residues coordinate Zn(2+): His-113 and Glu-183.

This sequence belongs to the ApnO family. Requires Zn(2+) as cofactor.

It catalyses the reaction D-apionate + NAD(+) = 3-oxoisoapionate + NADH + H(+). Its pathway is carbohydrate metabolism. Functionally, involved in catabolism of D-apiose. Catalyzes the conversion of D-apionate to 3-oxo-isoapionate. The chain is D-apionate oxidoisomerase from Rhizobium rhizogenes (strain K84 / ATCC BAA-868) (Agrobacterium radiobacter).